The primary structure comprises 349 residues: Holliday junction branch migration complex subunit RuvB (349 aa).

The interval 1–185 (MSQEKERLIS…FGSIFRLDFY (185 aa)) is large ATPase domain (RuvB-L). ATP is bound by residues Leu-24, Arg-25, Gly-66, Lys-69, Thr-70, Thr-71, 132–134 (EDY), Arg-175, Tyr-185, and Arg-222. Residue Thr-70 coordinates Mg(2+). The tract at residues 186 to 256 (DEEAIHDIVR…IAAESLACLE (71 aa)) is small ATPAse domain (RuvB-S). A head domain (RuvB-H) region spans residues 259–349 (KLGLDEIDHK…QQGLWTENGS (91 aa)). The DNA site is built by Arg-314 and Arg-319.

The protein belongs to the RuvB family. In terms of assembly, homohexamer. Forms an RuvA(8)-RuvB(12)-Holliday junction (HJ) complex. HJ DNA is sandwiched between 2 RuvA tetramers; dsDNA enters through RuvA and exits via RuvB. An RuvB hexamer assembles on each DNA strand where it exits the tetramer. Each RuvB hexamer is contacted by two RuvA subunits (via domain III) on 2 adjacent RuvB subunits; this complex drives branch migration. In the full resolvosome a probable DNA-RuvA(4)-RuvB(12)-RuvC(2) complex forms which resolves the HJ.

It is found in the cytoplasm. The catalysed reaction is ATP + H2O = ADP + phosphate + H(+). Functionally, the RuvA-RuvB-RuvC complex processes Holliday junction (HJ) DNA during genetic recombination and DNA repair, while the RuvA-RuvB complex plays an important role in the rescue of blocked DNA replication forks via replication fork reversal (RFR). RuvA specifically binds to HJ cruciform DNA, conferring on it an open structure. The RuvB hexamer acts as an ATP-dependent pump, pulling dsDNA into and through the RuvAB complex. RuvB forms 2 homohexamers on either side of HJ DNA bound by 1 or 2 RuvA tetramers; 4 subunits per hexamer contact DNA at a time. Coordinated motions by a converter formed by DNA-disengaged RuvB subunits stimulates ATP hydrolysis and nucleotide exchange. Immobilization of the converter enables RuvB to convert the ATP-contained energy into a lever motion, pulling 2 nucleotides of DNA out of the RuvA tetramer per ATP hydrolyzed, thus driving DNA branch migration. The RuvB motors rotate together with the DNA substrate, which together with the progressing nucleotide cycle form the mechanistic basis for DNA recombination by continuous HJ branch migration. Branch migration allows RuvC to scan DNA until it finds its consensus sequence, where it cleaves and resolves cruciform DNA. The polypeptide is Holliday junction branch migration complex subunit RuvB (Dehalococcoides mccartyi (strain CBDB1)).